We begin with the raw amino-acid sequence, 382 residues long: Cholinephosphotransferase 1 (382 aa).

The Cytoplasmic portion of the chain corresponds to 1–51 (MPQCECPEPLSAVQLKRLEEHKYSAAGRSLFEPPCQIYWNWLVQQIPTWVA). The chain crosses the membrane as a helical span at residues 52-72 (PNTLTTIGLVINVITTVILVY). N53 contributes to the CDP-choline binding site. At 73–82 (YSPTATEEVP) the chain is on the lumenal side. The chain crosses the membrane as a helical span at residues 83-107 (GWAFFLSALGLFIYQSLDAIDGKQA). D100 and D103 together coordinate Mg(2+). Residue R108 participates in CDP-choline binding. At 108-114 (RRTNSSS) the chain is on the cytoplasmic side. A helical membrane pass occupies residues 115–139 (ALGELFDHGCDAVSTVFVAVGTCIC). D121 is a Mg(2+) binding site. H122 (proton acceptor) is an active-site residue. D125 provides a ligand contact to Mg(2+). Residues 140 to 149 (CGIGAYPNWM) are Lumenal-facing. A helical transmembrane segment spans residues 150–168 (FFCGFVGMFMFFCAHWQTY). Residues 169-179 (VSGTLRFGLVD) are Cytoplasmic-facing. The helical transmembrane segment at 180 to 196 (VTEVQIAIIIMYLLTAF) threads the bilayer. The Lumenal segment spans residues 197–211 (TGVSFWEMRVPVLGV). Residues 212 to 237 (NLQTFPILGIIGGFLYSTYNYFFVIM) form a helical membrane-spanning segment. Over 238-254 (NGGVGKNGSTVADTSVL) the chain is Cytoplasmic. The helical transmembrane segment at 255–270 (TPGLHIGLILTLAFII) threads the bilayer. Residues 271–282 (FKKSSSHLFEHH) lie on the Lumenal side of the membrane. Residues 283–305 (PCLYVLTFGMVIAKISNKLVVAH) form a helical membrane-spanning segment. Topologically, residues 306 to 318 (MTKSELHLQDTAF) are cytoplasmic. A helical transmembrane segment spans residues 319–328 (IGPGLLFLNQ). Residues 329–335 (YFNSYID) lie on the Lumenal side of the membrane. Residues 336–365 (EHIVLWIAMVLSLVDLVRYCTAVCLQIASH) form a helical membrane-spanning segment. The Cytoplasmic segment spans residues 366-382 (LRIRVFSISPQGHAHKD).

The protein belongs to the CDP-alcohol phosphatidyltransferase class-I family. The cofactor is Mg(2+). Requires Mn(2+) as cofactor.

It localises to the golgi apparatus membrane. It catalyses the reaction CDP-choline + a 1,2-diacyl-sn-glycerol = a 1,2-diacyl-sn-glycero-3-phosphocholine + CMP + H(+). The catalysed reaction is 1-octadecanoyl-2-(5Z,8Z,11Z,14Z-eicosatetraenoyl)-sn-glycerol + CDP-choline = 1-octadecanoyl-2-(5Z,8Z,11Z,14Z-eicosatetraenoyl)-sn-glycero-3-phosphocholine + CMP + H(+). The enzyme catalyses 1-hexadecanoyl-2-(9Z-octadecenoyl)-sn-glycerol + CDP-choline = 1-hexadecanoyl-2-(9Z-octadecenoyl)-sn-glycero-3-phosphocholine + CMP + H(+). It carries out the reaction 1-hexadecanoyl-2-(4Z,7Z,10Z,13Z,16Z,19Z-docosahexaenoyl)-sn-glycerol + CDP-choline = 1-hexadecanoyl-2-(4Z,7Z,10Z,13Z,16Z,19Z-docosahexaenoyl)-sn-glycero-3-phosphocholine + CMP + H(+). It catalyses the reaction 1,2-dioctanoyl-sn-glycerol + CDP-choline = 1,2-dioctanoyl-sn-glycero-3-phosphocholine + CMP + H(+). It participates in phospholipid metabolism; phosphatidylcholine biosynthesis; phosphatidylcholine from phosphocholine: step 2/2. Functionally, catalyzes the final step of de novo phosphatidylcholine (PC) synthesis, i.e. the transfer of choline phosphate from CDP-choline to the free hydroxyl of a diacylglycerol (DAG), producing a PC. It thereby plays a central role in the formation and maintenance of vesicular membranes. The polypeptide is Cholinephosphotransferase 1 (chpt1) (Danio rerio (Zebrafish)).